We begin with the raw amino-acid sequence, 254 residues long: 4-hydroxy-tetrahydrodipicolinate reductase (254 aa).

NAD(+)-binding positions include 8 to 13 (GCSGKM), aspartate 35, 86 to 88 (CST), and 110 to 113 (SANM). Histidine 143 serves as the catalytic Proton donor/acceptor. Histidine 144 is a (S)-2,3,4,5-tetrahydrodipicolinate binding site. Lysine 147 acts as the Proton donor in catalysis. 153 to 154 (GT) contacts (S)-2,3,4,5-tetrahydrodipicolinate.

Belongs to the DapB family.

The protein localises to the cytoplasm. It catalyses the reaction (S)-2,3,4,5-tetrahydrodipicolinate + NAD(+) + H2O = (2S,4S)-4-hydroxy-2,3,4,5-tetrahydrodipicolinate + NADH + H(+). The enzyme catalyses (S)-2,3,4,5-tetrahydrodipicolinate + NADP(+) + H2O = (2S,4S)-4-hydroxy-2,3,4,5-tetrahydrodipicolinate + NADPH + H(+). It functions in the pathway amino-acid biosynthesis; L-lysine biosynthesis via DAP pathway; (S)-tetrahydrodipicolinate from L-aspartate: step 4/4. Catalyzes the conversion of 4-hydroxy-tetrahydrodipicolinate (HTPA) to tetrahydrodipicolinate. In Clostridium perfringens (strain SM101 / Type A), this protein is 4-hydroxy-tetrahydrodipicolinate reductase.